The following is a 503-amino-acid chain: Transcriptional regulator LovE (503 aa).

Polar residues predominate over residues 1–14; the sequence is MAADQGTFTTSVTL. The interval 1 to 21 is disordered; that stretch reads MAADQGTFTTSVTLSPVEGSR. Positions 35 to 67 form a DNA-binding region, zn(2)-C6 fungal-type; that stretch reads CDRCHAQKIKCTGNKEVTARAPCQRCQQAGLRC. 2 disordered regions span residues 89–124 and 331–362; these read ADPD…RQFL and SHMN…DTIP. Over residues 339 to 349 the composition is skewed to basic and acidic residues; sequence SRSESPSRDDT. Residues 350-359 show a composition bias toward polar residues; sequence SSTSGHSSVD.

Its subcellular location is the nucleus. Functionally, transcription factor that regulates the expression of the he gene cluster that mediates the biosynthesis of lovastatin (also known as mevinolin, mevacor or monacolin K), a hypolipidemic inhibitor of (3S)-hydroxymethylglutaryl-coenzyme A (HMG-CoA) reductase (HMGR). The protein is Transcriptional regulator LovE of Aspergillus terreus (strain NIH 2624 / FGSC A1156).